Reading from the N-terminus, the 283-residue chain is Pantothenate synthetase (283 aa).

Residue 30 to 37 (MGALHEGH) coordinates ATP. His-37 acts as the Proton donor in catalysis. Gln-61 contributes to the (R)-pantoate binding site. Gln-61 serves as a coordination point for beta-alanine. 147–150 (GEKD) lines the ATP pocket. Residue Gln-153 coordinates (R)-pantoate. ATP contacts are provided by residues Ile-176 and 184-187 (VSSR).

The protein belongs to the pantothenate synthetase family. In terms of assembly, homodimer.

Its subcellular location is the cytoplasm. The enzyme catalyses (R)-pantoate + beta-alanine + ATP = (R)-pantothenate + AMP + diphosphate + H(+). It functions in the pathway cofactor biosynthesis; (R)-pantothenate biosynthesis; (R)-pantothenate from (R)-pantoate and beta-alanine: step 1/1. In terms of biological role, catalyzes the condensation of pantoate with beta-alanine in an ATP-dependent reaction via a pantoyl-adenylate intermediate. This is Pantothenate synthetase from Chlorobium phaeobacteroides (strain DSM 266 / SMG 266 / 2430).